We begin with the raw amino-acid sequence, 384 residues long: Glutamate 5-kinase (384 aa).

K24 provides a ligand contact to ATP. 3 residues coordinate substrate: S64, D149, and N161. ATP contacts are provided by residues 181–182 (TD) and 223–229 (TGGMRTK). Residues 288 to 370 (PGAILIDAGA…RDIQPLLGYT (83 aa)) form the PUA domain.

It belongs to the glutamate 5-kinase family.

The protein localises to the cytoplasm. It carries out the reaction L-glutamate + ATP = L-glutamyl 5-phosphate + ADP. It functions in the pathway amino-acid biosynthesis; L-proline biosynthesis; L-glutamate 5-semialdehyde from L-glutamate: step 1/2. Its function is as follows. Catalyzes the transfer of a phosphate group to glutamate to form L-glutamate 5-phosphate. The polypeptide is Glutamate 5-kinase (Xylella fastidiosa (strain 9a5c)).